The primary structure comprises 308 residues: CD276 antigen homolog (308 aa).

The N-terminal stretch at 1–15 (MAALCLLLLLSLAEA) is a signal peptide. Topologically, residues 16–236 (IDLRVPELPV…VTGQHLSFPP (221 aa)) are extracellular. Positions 21 to 125 (PELPVIGLLD…VQNSSSASVS (105 aa)) constitute an Ig-like V-type domain. Intrachain disulfides connect cysteine 37/cysteine 112 and cysteine 155/cysteine 210. The 94-residue stretch at 135–228 (PTLHLEPSEA…DVTHASLTVT (94 aa)) folds into the Ig-like C2-type domain. The helical transmembrane segment at 237 to 257 (LVLWVTVGLSICLLCLLVALA) threads the bilayer. Residues 258 to 308 (CVCRKHLKQTCEEEQENAGNEEHEENGELKTAMQPLKVTSPGEDDDAECLE) lie on the Cytoplasmic side of the membrane. The segment at 270–308 (EEQENAGNEEHEENGELKTAMQPLKVTSPGEDDDAECLE) is disordered. Residues 299–308 (GEDDDAECLE) are compositionally biased toward acidic residues.

Belongs to the immunoglobulin superfamily. BTN/MOG family.

The protein resides in the membrane. Functionally, modulates immune responses. In Xenopus laevis (African clawed frog), this protein is CD276 antigen homolog (cd276).